An 897-amino-acid polypeptide reads, in one-letter code: Translation initiation factor IF-2 (897 aa).

A disordered region spans residues 52-310; sequence EHGSAPDKLT…LLQQGFQKPA (259 aa). Residues 68-82 are compositionally biased toward polar residues; the sequence is STLNVPGTGGKSKSV. Composition is skewed to basic and acidic residues over residues 85–159 and 166–217; these read EVRK…KDKV and EMTK…ENEK. Residues 256–272 are compositionally biased toward basic residues; it reads GRTRTASKTARPQKKGN. Over residues 273–286 the composition is skewed to basic and acidic residues; that stretch reads KHAESKADREEARA. The tr-type G domain maps to 396–565; that stretch reads PRAPVVTIMG…LLQAEVLELK (170 aa). The G1 stretch occupies residues 405–412; that stretch reads GHVDHGKT. GTP is bound at residue 405–412; it reads GHVDHGKT. A G2 region spans residues 430–434; it reads GITQH. The segment at 451-454 is G3; that stretch reads DTPG. Residues 451–455 and 505–508 contribute to the GTP site; these read DTPGH and NKID. Positions 505 to 508 are G4; the sequence is NKID. Positions 541-543 are G5; it reads SAK.

Belongs to the TRAFAC class translation factor GTPase superfamily. Classic translation factor GTPase family. IF-2 subfamily.

It is found in the cytoplasm. In terms of biological role, one of the essential components for the initiation of protein synthesis. Protects formylmethionyl-tRNA from spontaneous hydrolysis and promotes its binding to the 30S ribosomal subunits. Also involved in the hydrolysis of GTP during the formation of the 70S ribosomal complex. The sequence is that of Translation initiation factor IF-2 (infB) from Enterobacter cloacae.